Reading from the N-terminus, the 106-residue chain is Urease subunit beta (106 aa).

It belongs to the urease beta subunit family. Heterotrimer of UreA (gamma), UreB (beta) and UreC (alpha) subunits. Three heterotrimers associate to form the active enzyme.

It is found in the cytoplasm. The catalysed reaction is urea + 2 H2O + H(+) = hydrogencarbonate + 2 NH4(+). It participates in nitrogen metabolism; urea degradation; CO(2) and NH(3) from urea (urease route): step 1/1. This Prochlorococcus marinus (strain MIT 9215) protein is Urease subunit beta.